The primary structure comprises 71 residues: Pro-MCH (71 aa).

A signal peptide spans 1 to 20 (AKMNLSSYILILTFSLFSQG).

Belongs to the melanin-concentrating hormone family.

The protein resides in the secreted. In Pan paniscus (Pygmy chimpanzee), this protein is Pro-MCH (PMCH).